Reading from the N-terminus, the 383-residue chain is Non-structural maintenance of chromosomes element 4 homolog B (383 aa).

A compositionally biased stretch (basic and acidic residues) spans 1–22 (MRNSVKWETELTGDRSRRREAD). Disordered stretches follow at residues 1–59 (MRNS…EQGI), 198–231 (MKQRKSRVGNRKRTKPGAGVKPEEVDDTEAEKKS), and 355–383 (QGSVIQEETVVEDSSNMEGDNEDSKNGGL). Basic residues predominate over residues 201–212 (RKSRVGNRKRTK). Polar residues predominate over residues 355-372 (QGSVIQEETVVEDSSNME).

This sequence belongs to the NSE4 family. Interacts with SMC5, SMC6A or SMC6B. The SMC5-SMC6 complex is composed of the SMC5 and SMC6 heterodimer attached via their hinge domain and from the non-SMC subunit NSE4A or NSE4B. In terms of tissue distribution, not expressed in seedlings, rosette leaves and floral buds.

It localises to the nucleus. Functionally, component of the SMC5-SMC6 complex, that promotes sister chromatid alignment after DNA damage and facilitates double-stranded DNA breaks (DSBs) repair via homologous recombination between sister chromatids. In Arabidopsis thaliana (Mouse-ear cress), this protein is Non-structural maintenance of chromosomes element 4 homolog B (NSE4B).